Here is a 779-residue protein sequence, read N- to C-terminus: MDISEYDLTLDLDLQSKTFHGTETISASSGDFVLDAVGFNIEWIKVNGSDAKFEYDGNLLKINGLETAQKVEISYSGKISDSLSGIYFAGRESNGMVTTHFEATDARRMFPCIDHPAYKAVFSITLVIDKDYDAISNMPIKKVETSDRKIVEFEKTPRMSTYLLYIGVGKFKYASERYKDREIILASLKDIKSKYPIDIAKRSIEFYEGYFGIPYALPKMHLISVPEFGAGAMENWGAITFREIYLDIADNSAASTLRLSANVIAHEIAHQWFGDLVTMKWWNDLWLNESFATFMSYKTMDTIHPEWQFWGDFFVSRTSGALRSDSLKNTHPIEVDVKDPDEISQIFDEISYGKGASILRMIEDYVGAEDFRKGISKYLKEHAYGNAEGSDLWNAIETESGKPVNRIMEAWITKAGYPILKVSQDKTGIKVMQSRFFLGGGESTDRWPVPVKMRLNNGISQMLLEEESTVITDKDVIKLNADNLGFYRVNYDDETFSKIIENMDKLTPLDRVGLVDDLFAFLMAGVITPDTYKNRIKSFFNDKDANVISNIVNQFEYLRIITHYFDADAREFLGTAIRYLESADDENLKIAYGKASRLLALLDEAYCETLAPRFSNFEQQTPELKSAIATAYALSTGDVKGMVEKYRSLDRDEDKVKIISGFGKLKSSTDLSVVSGMIEKGEIKKQDMLSFYLSALETMAGREYIYSNLENIVKNVIRYFTGNRTASRTVEQILPVIGLTHPDAASIIERIGSKNTTMGLAKGKELLEVNRSLLERIGH.

Substrate-binding positions include Glu-102 and 231-235 (GAMEN). His-266 contacts Zn(2+). Glu-267 functions as the Proton acceptor in the catalytic mechanism. Zn(2+)-binding residues include His-270 and Glu-289.

The protein belongs to the peptidase M1 family. Part of the tricorn proteolytic complex. It depends on Zn(2+) as a cofactor.

Its subcellular location is the cytoplasm. In terms of biological role, proteases F1, F2 and F3 degrade oligopeptides produced by Tricorn (themselves probably produced by the proteasome), yielding free amino acids. This Thermoplasma volcanium (strain ATCC 51530 / DSM 4299 / JCM 9571 / NBRC 15438 / GSS1) protein is Tricorn protease-interacting factor F3 (trf3).